The sequence spans 75 residues: Conotoxin ar11a (75 aa).

The signal sequence occupies residues 1–19; sequence MKLCATFLLVLVTLPLVTG. A propeptide spanning residues 20-36 is cleaved from the precursor; it reads EKSSERSLSGAILRGVR. Cystine bridges form between Cys39-Cys53, Cys46-Cys58, Cys52-Cys63, and Cys57-Cys70.

In terms of tissue distribution, expressed by the venom duct.

It is found in the secreted. Its function is as follows. Both natural (L-Leu form) and synthetic (D-Leu from) peptides equally cause sensitivity to touch and body tremor. Neither L-Leu form nor D-Leu form is active on nerve-muscle preparation. The polypeptide is Conotoxin ar11a (Conus arenatus (Sand-dusted cone)).